The following is a 714-amino-acid chain: DNA gyrase subunit B (714 aa).

The Toprim domain maps to 492–606 (SELYVVEGDS…NGHVFLAQPP (115 aa)). Glutamate 498, aspartate 571, and aspartate 573 together coordinate Mg(2+).

It belongs to the type II topoisomerase GyrB family. Heterotetramer, composed of two GyrA and two GyrB chains. In the heterotetramer, GyrA contains the active site tyrosine that forms a transient covalent intermediate with DNA, while GyrB binds cofactors and catalyzes ATP hydrolysis. Mg(2+) serves as cofactor. It depends on Mn(2+) as a cofactor. Requires Ca(2+) as cofactor.

It is found in the cytoplasm. The enzyme catalyses ATP-dependent breakage, passage and rejoining of double-stranded DNA.. Its activity is regulated as follows. DNA supercoiling is inhibited by EDTA, novobiocin, coumermycin and ciprofloxacin. A type II topoisomerase that negatively supercoils closed circular double-stranded DNA in an ATP-dependent manner and also catalyzes the interconversion of other topological isomers of double-stranded DNA rings, including catenanes and knotted rings. Relaxes negatively supercoiled DNA in an ATP-independent manner. A linear reaction intermediate can be trapped in the presence of the antibiotic ciprofloxacin. Negative supercoiling favors strand separation, and DNA replication, transcription, recombination and repair, all of which involve strand separation. Type II topoisomerases break and join 2 DNA strands simultaneously in an ATP-dependent manner. This Mycobacterium bovis (strain BCG / Pasteur 1173P2) protein is DNA gyrase subunit B.